The chain runs to 188 residues: Photosystem I assembly protein Ycf4 (188 aa).

2 consecutive transmembrane segments (helical) span residues 26-46 (YFWA…GLSS) and 68-88 (LVMG…WFVI).

It belongs to the Ycf4 family.

It localises to the cellular thylakoid membrane. Functionally, seems to be required for the assembly of the photosystem I complex. This is Photosystem I assembly protein Ycf4 from Synechococcus sp. (strain ATCC 27144 / PCC 6301 / SAUG 1402/1) (Anacystis nidulans).